We begin with the raw amino-acid sequence, 332 residues long: HTH-type transcriptional regulator RegA (332 aa).

Residues 1–57 form the HTH lacI-type domain; sequence MATSIKDVAREAGVSIATVSRVLNDIDVVNEDTKKKVLDAIKELGYRPNIVARSLKT. A DNA-binding region (H-T-H motif) is located at residues 5–24; sequence IKDVAREAGVSIATVSRVLN.

In terms of biological role, involved in the regulation of amylase production. This chain is HTH-type transcriptional regulator RegA (regA), found in Clostridium saccharobutylicum.